Here is a 361-residue protein sequence, read N- to C-terminus: POU domain, class 3, transcription factor 4 (361 aa).

Disordered stretches follow at residues 99 to 131 and 144 to 192; these read PHVAHHSPHTNHPNAWGASPAPNSSITNSGQPL and MLEH…PTSD. The segment covering 119-131 has biased composition (polar residues); the sequence is APNSSITNSGQPL. Positions 165 to 183 are enriched in basic and acidic residues; the sequence is VLREPPDHGELGSHHCQDH. In terms of domain architecture, POU-specific spans 186–260; sequence EETPTSDELE…LLNKWLEEAD (75 aa). Ser265 carries the phosphoserine modification. Positions 278–337 form a DNA-binding region, homeobox; it reads KRKKRTSIEVSVKGVLETHFLKCPKPAAQEISSLADSLQLEKEVVRVWFCNRRQKEKRMT. Residues 334-361 form a disordered region; that stretch reads KRMTPPGDQQPHEVYSHTVKTDASCHDL. Basic and acidic residues predominate over residues 343 to 361; the sequence is QPHEVYSHTVKTDASCHDL.

Belongs to the POU transcription factor family. Class-3 subfamily.

Its subcellular location is the nucleus. Probable transcription factor which exert its primary action widely during early neural development and in a very limited set of neurons in the mature brain. This chain is POU domain, class 3, transcription factor 4 (Pou3f4), found in Mesocricetus auratus (Golden hamster).